Reading from the N-terminus, the 487-residue chain is PPE family protein PPE10 (487 aa).

Positions 398–424 are enriched in low complexity; it reads APVGGLDSGNPNPGSGSAAAGSGANPG. The tract at residues 398–487 is disordered; sequence APVGGLDSGN…PRIGQPVGSE (90 aa). Positions 428-446 are enriched in polar residues; it reads PGTSYPSFVNSGSNDSGLR.

It belongs to the mycobacterial PPE family.

It localises to the secreted. In terms of biological role, plays a major role in the integrity and stability of the capsule. The sequence is that of PPE family protein PPE10 (PPE10) from Mycobacterium tuberculosis (strain CDC 1551 / Oshkosh).